Here is a 317-residue protein sequence, read N- to C-terminus: Long form salivary protein D7L2 (317 aa).

An N-terminal signal peptide occupies residues 1–20 (MYKLLVALHLILCTVSHVKT). Cystine bridges form between Cys-39–Cys-76, Cys-72–Cys-131, Cys-181–Cys-214, Cys-195–Cys-316, and Cys-255–Cys-266. Trp-58 and Tyr-73 together coordinate thromboxane A2. The serotonin site is built by Glu-182, Tyr-264, Asp-281, Asp-284, and Met-308.

Belongs to the PBP/GOBP family. Female salivary gland.

It is found in the secreted. Functionally, modulates blood feeding of female mosquitoes on vertebrate species by binding and sequestering different mediators involved in the host response, such as biogenic amines and eicosanoids. Binds serotonin with high affinity. Binds tryptamine, octopamine, dopamine and noradrenaline with low affinity. Binds leukotriene C4, leukotriene D4, leukotriene E4 and U-46619, a stable analog of thromboxane A2. Does not bind leukotriene B4, adrenaline, histamine and ADP. Inhibits platelet aggregation induced by low concentrations of collagen and arachidonic acid but not by ADP or adrenaline. This Anopheles darlingi (Mosquito) protein is Long form salivary protein D7L2.